A 632-amino-acid polypeptide reads, in one-letter code: Chaperone protein HtpG (632 aa).

The segment at 1–339 (MAHETMSFQA…SADLPLNVSR (339 aa)) is a; substrate-binding. The b stretch occupies residues 340–559 (EILQESRDVK…DNDMSGYLQR (220 aa)). Positions 560–632 (MLKAAGQNAP…TNALLLSRAA (73 aa)) are c.

This sequence belongs to the heat shock protein 90 family. In terms of assembly, homodimer.

Its subcellular location is the cytoplasm. Its function is as follows. Molecular chaperone. Has ATPase activity. The polypeptide is Chaperone protein HtpG (Burkholderia cenocepacia (strain HI2424)).